The following is a 408-amino-acid chain: Chaperonin GroEL (408 aa).

Residues 30–33 (TLGP), Lys51, and 87–91 (DGTTT) contribute to the ATP site.

This sequence belongs to the chaperonin (HSP60) family. Forms a cylinder of 14 subunits composed of two heptameric rings stacked back-to-back. Interacts with the co-chaperonin GroES.

The protein resides in the cytoplasm. It carries out the reaction ATP + H2O + a folded polypeptide = ADP + phosphate + an unfolded polypeptide.. Together with its co-chaperonin GroES, plays an essential role in assisting protein folding. The GroEL-GroES system forms a nano-cage that allows encapsulation of the non-native substrate proteins and provides a physical environment optimized to promote and accelerate protein folding. This is Chaperonin GroEL from Rickettsia rickettsii.